We begin with the raw amino-acid sequence, 66 residues long: Small ribosomal subunit protein bS21B (66 aa).

Residues 38–66 (YVKPTQKRKIAKKAAISKAKKEARRSYSY) form a disordered region.

Belongs to the bacterial ribosomal protein bS21 family.

This chain is Small ribosomal subunit protein bS21B, found in Francisella tularensis subsp. tularensis (strain SCHU S4 / Schu 4).